Reading from the N-terminus, the 530-residue chain is Chaperone Ric-8A (530 aa).

Ser-435 bears the Phosphoserine; by CK2 mark. Thr-440 is modified (phosphothreonine; by CK2). Residue Thr-442 is modified to Phosphothreonine. Residues Ser-501, Ser-522, Ser-523, and Ser-527 each carry the phosphoserine modification.

Belongs to the synembryn family. Interacts with GDP-bound G alpha proteins GNAI1, GNAO1 and GNAQ, and with GNA13 with lower affinity. Does not interact with G-alpha proteins when they are in complex with subunits beta and gamma. Interacts (via C-terminus) with RGS14; the interaction stimulates the dissociation of the complex between RGS14 and the active GTP-bound form of GNAI1. Interacts with NCS1; interaction is favored in the absence of Ca(2+) and myristoylation of NCS1 is not required. Post-translationally, phosphorylated at Ser-435 and Thr-440 by CK2, stabilizing its interface with G alpha proteins.

The protein resides in the cytoplasm. Its subcellular location is the cell cortex. Chaperone that specifically binds and folds nascent G alpha proteins prior to G protein heterotrimer formation, promoting their stability and activity: folds GNAI1, GNAO1, GNA13 and GNAQ. Does not fold G(s) G-alpha proteins GNAS nor GNAL. Also acts as a guanine nucleotide exchange factor (GEF) for G alpha proteins by stimulating exchange of bound GDP for free GTP. Involved in regulation of microtubule pulling forces during mitotic movement of chromosomes by stimulating G(i)-alpha protein (GNAI1), possibly leading to release G(i)-alpha-GTP and NuMA proteins from the NuMA-GPSM2-G(i)-alpha-GDP complex. Also acts as an activator for G(q)-alpha (GNAQ) protein by enhancing the G(q)-coupled receptor-mediated ERK activation. This chain is Chaperone Ric-8A, found in Rattus norvegicus (Rat).